Consider the following 902-residue polypeptide: HTH-type transcriptional regulator MalT (902 aa).

Residue 39–46 coordinates ATP; sequence SPAGYGKT. The region spanning 832–897 is the HTH luxR-type domain; it reads ELVRTSPLTQ…EAIVTAENLL (66 aa). The segment at residues 856–875 is a DNA-binding region (H-T-H motif); that stretch reads NEQIAQELDVAGTTIKTHIR.

Belongs to the MalT family. As to quaternary structure, monomer in solution. Oligomerizes to an active state in the presence of the positive effectors ATP and maltotriose.

Its activity is regulated as follows. Activated by ATP and maltotriose, which are both required for DNA binding. Its function is as follows. Positively regulates the transcription of the maltose regulon whose gene products are responsible for uptake and catabolism of malto-oligosaccharides. Specifically binds to the promoter region of its target genes, recognizing a short DNA motif called the MalT box. This is HTH-type transcriptional regulator MalT from Vibrio parahaemolyticus serotype O3:K6 (strain RIMD 2210633).